The sequence spans 89 residues: Cytochrome c6 (89 aa).

Heme c contacts are provided by C15, C18, H19, and M61.

Belongs to the cytochrome c family. PetJ subfamily. In terms of assembly, monomer. In terms of processing, binds 1 heme c group covalently per subunit.

The protein resides in the plastid. The protein localises to the chloroplast thylakoid lumen. Functions as an electron carrier between membrane-bound cytochrome b6-f and photosystem I in oxygenic photosynthesis. This chain is Cytochrome c6 (petJ), found in Chlorolobion braunii (Green alga).